The primary structure comprises 125 residues: Large ribosomal subunit protein bL12 (125 aa).

The protein belongs to the bacterial ribosomal protein bL12 family. As to quaternary structure, homodimer. Part of the ribosomal stalk of the 50S ribosomal subunit. Forms a multimeric L10(L12)X complex, where L10 forms an elongated spine to which 2 to 4 L12 dimers bind in a sequential fashion. Binds GTP-bound translation factors.

Forms part of the ribosomal stalk which helps the ribosome interact with GTP-bound translation factors. Is thus essential for accurate translation. This is Large ribosomal subunit protein bL12 from Mesorhizobium japonicum (strain LMG 29417 / CECT 9101 / MAFF 303099) (Mesorhizobium loti (strain MAFF 303099)).